The chain runs to 693 residues: Polyribonucleotide nucleotidyltransferase (693 aa).

Mg(2+) is bound by residues D489 and D495. A KH domain is found at P556–V615. Positions G625–R693 constitute an S1 motif domain.

It belongs to the polyribonucleotide nucleotidyltransferase family. In terms of assembly, component of the RNA degradosome, which is a multiprotein complex involved in RNA processing and mRNA degradation. It depends on Mg(2+) as a cofactor.

It localises to the cytoplasm. It catalyses the reaction RNA(n+1) + phosphate = RNA(n) + a ribonucleoside 5'-diphosphate. Functionally, involved in mRNA degradation. Catalyzes the phosphorolysis of single-stranded polyribonucleotides processively in the 3'- to 5'-direction. The sequence is that of Polyribonucleotide nucleotidyltransferase from Francisella philomiragia subsp. philomiragia (strain ATCC 25017 / CCUG 19701 / FSC 153 / O#319-036).